A 139-amino-acid chain; its full sequence is 2S seed storage albumin protein (139 aa).

The first 15 residues, 1 to 15 (AALLVALLFVANAAA), serve as a signal peptide directing secretion. IgE-binding regions lie at residues 16-30 (FRTT…EDID), 29-34 (IDNPRR), 64-78 (GYDE…RQCC), 65-73 (YDEDNQRQH), 95-103 (QVVRRQQQQ), 99-111 (RQQQ…GEEM), 102-114 (QQQG…MEEM), 105-117 (GLRG…MVQS), 112-126 (EEMV…NECG), 125-136 (CGISSQRCEIRR), and 125-139 (CGIS…RSWF). Propeptides lie at residues 16–31 (FRTT…DIDN) and 58–71 (QQSR…DNQR). 4 disulfides stabilise this stretch: cysteine 39–cysteine 88, cysteine 52–cysteine 77, cysteine 78–cysteine 125, and cysteine 90–cysteine 132. An immunodominant epitope. IgE-binding; binds to IgE in 75% of the 20 walnut-allergic patients tested region spans residues 104–115 (QGLRGEEMEEMV). The segment at 107 to 110 (RGEE) is minimally required for IgE-binding by the immunodominant epitope. A propeptide spanning residues 136–139 (RSWF) is cleaved from the precursor.

This sequence belongs to the 2S seed storage albumins family. In terms of assembly, the mature protein consists of a small chain and a large chain linked by disulfide bonds. Expressed in seed (at protein level). Expressed in the peel of mature seed.

Its function is as follows. Seed storage protein. The polypeptide is 2S seed storage albumin protein (Juglans regia (English walnut)).